The following is a 431-amino-acid chain: Enolase (431 aa).

Gln166 contributes to the (2R)-2-phosphoglycerate binding site. Glu208 acts as the Proton donor in catalysis. The Mg(2+) site is built by Asp245, Glu288, and Asp315. (2R)-2-phosphoglycerate-binding residues include Lys340, Arg369, Ser370, and Lys391. Residue Lys340 is the Proton acceptor of the active site.

This sequence belongs to the enolase family. The cofactor is Mg(2+).

It is found in the cytoplasm. The protein resides in the secreted. It localises to the cell surface. It catalyses the reaction (2R)-2-phosphoglycerate = phosphoenolpyruvate + H2O. Its pathway is carbohydrate degradation; glycolysis; pyruvate from D-glyceraldehyde 3-phosphate: step 4/5. Its function is as follows. Catalyzes the reversible conversion of 2-phosphoglycerate (2-PG) into phosphoenolpyruvate (PEP). It is essential for the degradation of carbohydrates via glycolysis. The chain is Enolase from Clostridium botulinum (strain 657 / Type Ba4).